A 309-amino-acid chain; its full sequence is Malate dehydrogenase (309 aa).

NAD(+) is bound by residues 6 to 11 (GSGRVG) and D31. Residues R80 and R86 each contribute to the substrate site. Residues N93 and 116 to 118 (TTN) contribute to the NAD(+) site. Substrate contacts are provided by N118 and R149. The active-site Proton acceptor is H173.

The protein belongs to the LDH/MDH superfamily. As to quaternary structure, homotetramer.

The catalysed reaction is (S)-malate + NAD(+) = oxaloacetate + NADH + H(+). In terms of biological role, catalyzes the reversible oxidation of malate to oxaloacetate. Exhibits higher specific activity for oxaloacetate reduction than for malate oxidation in vitro. Has a strong preference for NAD. Can use NADPH for oxaloacetate reduction, but activity decreases more than 90%. No activity detected with NADP(+) and malate. This Pyrobaculum islandicum (strain DSM 4184 / JCM 9189 / GEO3) protein is Malate dehydrogenase.